Here is a 106-residue protein sequence, read N- to C-terminus: Protein translation factor SUI1 homolog (106 aa).

Belongs to the SUI1 family.

In terms of biological role, additional factor that functions in concert with eIF-2 and the initiator tRNA in directing the ribosome to the proper start site of translation. The sequence is that of Protein translation factor SUI1 homolog from Acanthamoeba polyphaga mimivirus (APMV).